The sequence spans 108 residues: Glutaredoxin 4 (108 aa).

The region spanning Phe-4–Tyr-106 is the Glutaredoxin domain. Lys-21 lines the glutathione pocket. Cys-29 contacts [2Fe-2S] cluster. Glutathione-binding positions include Arg-58, Phe-70, and Cys-83–Ser-84.

This sequence belongs to the glutaredoxin family. Monothiol subfamily. As to quaternary structure, homodimer.

It localises to the cytoplasm. Monothiol glutaredoxin involved in the biogenesis of iron-sulfur clusters. The protein is Glutaredoxin 4 (grxD) of Buchnera aphidicola subsp. Acyrthosiphon pisum (strain APS) (Acyrthosiphon pisum symbiotic bacterium).